Here is a 204-residue protein sequence, read N- to C-terminus: Large ribosomal subunit protein eL15y (204 aa).

The tract at residues 162–204 (RGLTSEGKKNRGLRGKGHNNHKNRPSRRATWKKNNSISLRRYR) is disordered. Basic residues predominate over residues 171–192 (NRGLRGKGHNNHKNRPSRRATW). A compositionally biased stretch (polar residues) spans 193–204 (KKNNSISLRRYR).

It belongs to the eukaryotic ribosomal protein eL15 family.

This is Large ribosomal subunit protein eL15y (RPL15B) from Arabidopsis thaliana (Mouse-ear cress).